A 124-amino-acid polypeptide reads, in one-letter code: Ribosome-binding factor A (124 aa).

Belongs to the RbfA family. In terms of assembly, monomer. Binds 30S ribosomal subunits, but not 50S ribosomal subunits or 70S ribosomes.

The protein localises to the cytoplasm. One of several proteins that assist in the late maturation steps of the functional core of the 30S ribosomal subunit. Associates with free 30S ribosomal subunits (but not with 30S subunits that are part of 70S ribosomes or polysomes). Required for efficient processing of 16S rRNA. May interact with the 5'-terminal helix region of 16S rRNA. In Sorangium cellulosum (strain So ce56) (Polyangium cellulosum (strain So ce56)), this protein is Ribosome-binding factor A.